The following is a 328-amino-acid chain: Ribosomal RNA small subunit methyltransferase H (328 aa).

S-adenosyl-L-methionine is bound by residues 37–39 (GGH), Asp-57, Phe-83, Asp-104, and Gln-111.

This sequence belongs to the methyltransferase superfamily. RsmH family.

It localises to the cytoplasm. It carries out the reaction cytidine(1402) in 16S rRNA + S-adenosyl-L-methionine = N(4)-methylcytidine(1402) in 16S rRNA + S-adenosyl-L-homocysteine + H(+). In terms of biological role, specifically methylates the N4 position of cytidine in position 1402 (C1402) of 16S rRNA. The polypeptide is Ribosomal RNA small subunit methyltransferase H (Neisseria meningitidis serogroup C / serotype 2a (strain ATCC 700532 / DSM 15464 / FAM18)).